The chain runs to 412 residues: 23S rRNA (uracil(747)-C(5))-methyltransferase (412 aa).

C63, C69, C72, and C139 together coordinate [4Fe-4S] cluster. The S-adenosyl-L-methionine site is built by Q255, Y281, E302, and D343. C369 serves as the catalytic Nucleophile.

It belongs to the class I-like SAM-binding methyltransferase superfamily. RNA M5U methyltransferase family.

It carries out the reaction uridine(747) in 23S rRNA + S-adenosyl-L-methionine = 5-methyluridine(747) in 23S rRNA + S-adenosyl-L-homocysteine + H(+). Its function is as follows. Catalyzes the formation of 5-methyl-uridine at position equivalent to 747 (m5U747) in 23S rRNA. The protein is 23S rRNA (uracil(747)-C(5))-methyltransferase of Pyrococcus horikoshii (strain ATCC 700860 / DSM 12428 / JCM 9974 / NBRC 100139 / OT-3).